Reading from the N-terminus, the 634-residue chain is Protection of telomeres protein 1 (634 aa).

Belongs to the telombin family. In terms of assembly, homodimer or homooligomer. Component of the shelterin complex (telosome) composed of TERF1, TERF2, TINF2, TERF2IP, ACD and POT1. Binds single-stranded telomeric DNA as a monomer. Associated component of the telomerase holoenzyme complex. Found in a complex with TERF1, TINF2 and TNKS1. Interacts with TNKS1. Forms heterodimers with ACD. Identified in a complex with ACD and single-stranded telomeric DNA.

Its subcellular location is the nucleus. It is found in the chromosome. The protein resides in the telomere. Component of the telomerase ribonucleoprotein (RNP) complex that is essential for the replication of chromosome termini. Is a component of the double-stranded telomeric DNA-binding TRF1 complex which is involved in the regulation of telomere length by cis-inhibition of telomerase. Also acts as a single-stranded telomeric DNA-binding protein and thus may act as a downstream effector of the TRF1 complex and may transduce information about telomere maintenance and/or length to the telomere terminus. Component of the shelterin complex (telosome) that is involved in the regulation of telomere length and protection. Shelterin associates with arrays of double-stranded TTAGGG repeats added by telomerase and protects chromosome ends; without its protective activity, telomeres are no longer hidden from the DNA damage surveillance and chromosome ends are inappropriately processed by DNA repair pathways. Binds to two or more telomeric single-stranded 5'-TTAGGG-3' repeats (G-strand) and with high specificity to a minimal telomeric single-stranded 5'-TAGGGTTAG-3' sequence. Binds telomeric single-stranded sequences internally or at proximity of a 3'-end. Its activity is TERT dependent but it does not increase TERT activity by itself. In contrast, the ACD-POT1 heterodimer enhances telomere elongation by increasing telomerase processivity. In Macaca fascicularis (Crab-eating macaque), this protein is Protection of telomeres protein 1 (POT1).